Reading from the N-terminus, the 277-residue chain is Knob-associated histidine-rich protein (277 aa).

2 disordered regions span residues 95-114 and 162-277; these read DGSH…GYGY and SSVN…KKKK. Basic and acidic residues-rich tracts occupy residues 169–190 and 211–220; these read KHGD…EGEK and KDNEDAESVK. The span at 221–237 shows a compositional bias: basic residues; it reads SKKHKSHDCEKKKSKKH. Basic and acidic residues-rich tracts occupy residues 238-259 and 268-277; these read KDNE…GEKH and KTNEEKKKKK.

The protein resides in the secreted. Functionally, KAHRP might mimick human histidine-rich glycoproteins to anchor host thrombospondin or a parasite analog in a binding complex with the endothelial cell receptor. This chain is Knob-associated histidine-rich protein, found in Plasmodium falciparum (isolate CDC / Honduras).